Reading from the N-terminus, the 623-residue chain is Dynein axonemal intermediate chain 2 (623 aa).

5 WD repeats span residues 214-254 (KPLS…LVAE), 261-302 (SHRD…EPIE), 362-401 (GHHG…SSIM), 405-445 (YHMA…CDPA), and 450-489 (VCDD…STLQ). Positions 565–602 (AEALKKKPKPRKKSSVKVEAEEEVEENVGEEEEAGGII) are disordered. Residues 570–579 (KKPKPRKKSS) are compositionally biased toward basic residues. Over residues 584-598 (AEEEVEENVGEEEEA) the composition is skewed to acidic residues.

The protein belongs to the dynein intermediate chain family. In terms of assembly, consists of at least two heavy chains and a number of intermediate and light chains. Interacts with DNAAF2. Interacts with DNAAF6/PIH1D3. Interacts with HEATR2; probably involved in outer arm dynein assembly. Interacts with CFAP53. In terms of tissue distribution, predominantly expressed in ovary, testis and lung.

It localises to the cytoplasm. The protein resides in the cytoskeleton. It is found in the cilium axoneme. Its subcellular location is the dynein axonemal particle. Its function is as follows. Part of the dynein complex of respiratory cilia. The polypeptide is Dynein axonemal intermediate chain 2 (Dnai2) (Mus musculus (Mouse)).